Consider the following 404-residue polypeptide: UBP1-associated protein 2C (404 aa).

The segment at 1-29 (MDMMKKRKLDENGNGLNTNGGGTIGPTRL) is disordered. 2 RRM domains span residues 75–152 (RKLF…LAAS) and 167–248 (RKIY…GKKG). Disordered regions lie at residues 246–270 (KKGGKPGMPQAQDGGSGHGHVHGEG) and 344–404 (GSGQ…PPNY).

Expressed in root apical and lateral meristems, young leaves and embryos.

The protein localises to the nucleus. In terms of biological role, heterogeneous nuclear ribonucleoprotein (hnRNP)-like protein that acts as a component of a complex regulating the turnover of mRNAs in the nucleus. Binds with high affinity to RNA molecules that contain U-rich sequences in 3'-UTRs. May function in complex with UBP1 and contribute to the stabilization of mRNAs in the nucleus. This Arabidopsis thaliana (Mouse-ear cress) protein is UBP1-associated protein 2C (UBA2C).